A 481-amino-acid polypeptide reads, in one-letter code: UDP-glycosyltransferase 85C2 (481 aa).

His23 serves as the catalytic Proton acceptor. An an anthocyanidin-binding site is contributed by His23. Asp120 functions as the Charge relay in the catalytic mechanism. Residues Thr143, Gln362, His377, Trp380, Ser382, Glu385, Asp401, and Gln402 each contribute to the UDP-alpha-D-glucose site.

It belongs to the UDP-glycosyltransferase family.

The enzyme catalyses steviol + UDP-alpha-D-glucose = steviolmonoside + UDP + H(+). It carries out the reaction steviolmonoside + UDP-alpha-D-glucose = rubusoside + UDP. Functionally, involved in the biosynthesis of steviol glycosides in leaves. Converts steviol to the mono-glycoside steviolmonoside. Converts the mono-glycoside steviolmonoside to the bi-glycoside rubusoside. This is UDP-glycosyltransferase 85C2 from Stevia rebaudiana (Stevia).